A 408-amino-acid chain; its full sequence is Protein SLX4IP (408 aa).

Residues Lys61 and Lys79 each participate in a glycyl lysine isopeptide (Lys-Gly) (interchain with G-Cter in SUMO2) cross-link. Ser130 is modified (phosphoserine). Residues Lys167 and Lys176 each participate in a glycyl lysine isopeptide (Lys-Gly) (interchain with G-Cter in SUMO2) cross-link. Residues Thr173–Ile226 form a disordered region. Over residues Gly208–Met219 the composition is skewed to polar residues. Ser213 is subject to Phosphoserine. Glycyl lysine isopeptide (Lys-Gly) (interchain with G-Cter in SUMO2) cross-links involve residues Lys239 and Lys242. Polar residues predominate over residues Val243–Gln255. The disordered stretch occupies residues Val243–Leu313. Glycyl lysine isopeptide (Lys-Gly) (interchain with G-Cter in SUMO2) cross-links involve residues Lys256, Lys291, Lys347, Lys356, and Lys372. The disordered stretch occupies residues Leu365–His408. Over residues Asn374–Pro397 the composition is skewed to polar residues. At Thr392 the chain carries Phosphothreonine. Basic residues predominate over residues Thr398–His408. Residue Lys399 forms a Glycyl lysine isopeptide (Lys-Gly) (interchain with G-Cter in SUMO2) linkage.

Belongs to the SLX4IP family. As to quaternary structure, interacts with SLX4/BTBD12; subunit of different structure-specific endonucleases.

The polypeptide is Protein SLX4IP (SLX4IP) (Homo sapiens (Human)).